A 492-amino-acid chain; its full sequence is G2/mitotic-specific cyclin CLB2 (492 aa).

The segment at 1-176 (MPQVTKTNNE…QPEVGERSQS (176 aa)) is disordered. A compositionally biased stretch (polar residues) spans 23–33 (QESISTIKNTT). A compositionally biased stretch (low complexity) spans 34–58 (ISNSQHKQQTQQQISSPPQVSVTSS). Residues 59 to 83 (EGVSHVNTRQYLGDVSNQYITNAKP) show a composition bias toward polar residues. A compositionally biased stretch (low complexity) spans 111 to 135 (ASDNNNNGSTSSSSNSSNNNNNDAN). Residues 208-334 (EIFSYYYELE…MLTILNFDLN (127 aa)) enclose the Cyclin N-terminal domain.

This sequence belongs to the cyclin family. Cyclin AB subfamily.

2/mitotic-specific cyclin essential for the control of the cell cycle at the G2/M (mitosis) transition. G2/M cyclins accumulate steadily during G2 and are abruptly destroyed at mitosis. Degradation is necessary for the cell to exit from mitosis. Plays a role in morphogenesis by negatively regulating polarized growth. Through binding to CDC28 regulates cytokinesis, partly by phosphorylation of the actomyosin ring component IQG1. Also involved in the phosphorylation of CDC6 and CDC54. This chain is G2/mitotic-specific cyclin CLB2 (CLB2), found in Candida albicans (strain SC5314 / ATCC MYA-2876) (Yeast).